We begin with the raw amino-acid sequence, 874 residues long: Alanine--tRNA ligase (874 aa).

4 residues coordinate Zn(2+): His562, His566, Cys663, and His667.

The protein belongs to the class-II aminoacyl-tRNA synthetase family. It depends on Zn(2+) as a cofactor.

It localises to the cytoplasm. The catalysed reaction is tRNA(Ala) + L-alanine + ATP = L-alanyl-tRNA(Ala) + AMP + diphosphate. Catalyzes the attachment of alanine to tRNA(Ala) in a two-step reaction: alanine is first activated by ATP to form Ala-AMP and then transferred to the acceptor end of tRNA(Ala). Also edits incorrectly charged Ser-tRNA(Ala) and Gly-tRNA(Ala) via its editing domain. The chain is Alanine--tRNA ligase from Bordetella pertussis (strain Tohama I / ATCC BAA-589 / NCTC 13251).